The primary structure comprises 469 residues: Cytosolic beta-glucosidase (469 aa).

Substrate-binding residues include glutamine 17, histidine 120, and asparagine 164. The Proton donor role is filled by glutamate 165. Tyrosine 309 contacts substrate. Glutamate 373 acts as the Nucleophile in catalysis. Residues tryptophan 417 and 424–425 each bind substrate; that span reads EW.

It belongs to the glycosyl hydrolase 1 family. Klotho subfamily. In terms of processing, the N-terminus is blocked. As to expression, present in hepatocytes (at protein level).

It is found in the cytoplasm. It localises to the cytosol. The enzyme catalyses Hydrolysis of terminal, non-reducing beta-D-glucosyl residues with release of beta-D-glucose.. The catalysed reaction is a beta-D-glucosyl-(1&lt;-&gt;1')-N-acylsphing-4-enine + H2O = an N-acylsphing-4-enine + D-glucose. It catalyses the reaction a beta-D-galactosyl-(1&lt;-&gt;1')-N-acylsphing-4-enine + H2O = an N-acylsphing-4-enine + D-galactose. It carries out the reaction beta-D-glucosyl-(1&lt;-&gt;1)-sphing-4-enine + H2O = sphing-4-enine + D-glucose. The enzyme catalyses beta-D-glucosyl-(1&lt;-&gt;1)-N-octadecanoylsphing-4-enine + H2O = N-octadecanoylsphing-4-enine + D-glucose. The catalysed reaction is beta-D-galactosyl-(1&lt;-&gt;1)-sphing-4-enine + H2O = sphing-4-enine + D-galactose. It catalyses the reaction beta-D-galactosyl-(1&lt;-&gt;1')-N-octadecanoylsphing-4-enine + H2O = N-octadecanoylsphing-4-enine + D-galactose. It carries out the reaction a beta-D-xylosyl-(1&lt;-&gt;1')-N-acylsphing-4-enine + cholesterol = cholesteryl 3-beta-D-xyloside + an N-acylsphing-4-enine. With respect to regulation, inhibited by 2,4-dinitrophenyl-2-fluoro-2-deoxy-beta-D-glucopyranoside. Its function is as follows. Neutral cytosolic beta-glycosidase with a broad substrate specificity that could play a role in the catabolism of glycosylceramides. Has a significant glucosylceramidase activity in vitro. However, that activity is relatively low and its significance in vivo is not clear. Hydrolyzes galactosylceramide/GalCer, glucosylsphingosine/GlcSph and galactosylsphingosine/GalSph. However, the in vivo relevance of these activities is unclear. It can also hydrolyze a broad variety of dietary glycosides including phytoestrogens, flavonols, flavones, flavanones and cyanogens in vitro and could therefore play a role in the metabolism of xenobiotics. Possesses transxylosylase activity in vitro using xylosylated ceramides/XylCers (such as beta-D-xylosyl-(1&lt;-&gt;1')-N-acylsphing-4-enine) as xylosyl donors and cholesterol as acceptor. Could also play a role in the catabolism of cytosolic sialyl free N-glycans. In Cavia porcellus (Guinea pig), this protein is Cytosolic beta-glucosidase.